Reading from the N-terminus, the 88-residue chain is Guanine nucleotide-binding protein subunit gamma (88 aa).

Residue C84 is the site of S-palmitoyl cysteine attachment. C85 is subject to Cysteine methyl ester. The S-farnesyl cysteine moiety is linked to residue C85. A propeptide spans 86–88 (TIM) (removed in mature form).

This sequence belongs to the G protein gamma family. G proteins are composed of 3 units, alpha, beta and gamma.

It is found in the membrane. This Candida glabrata (strain ATCC 2001 / BCRC 20586 / JCM 3761 / NBRC 0622 / NRRL Y-65 / CBS 138) (Yeast) protein is Guanine nucleotide-binding protein subunit gamma.